A 240-amino-acid chain; its full sequence is Fimbriae Y protein (240 aa).

The protein localises to the fimbrium. The protein is Fimbriae Y protein (fimY) of Salmonella typhimurium (strain LT2 / SGSC1412 / ATCC 700720).